Reading from the N-terminus, the 293-residue chain is 4-hydroxy-tetrahydrodipicolinate synthase (293 aa).

T50 contributes to the pyruvate binding site. Residue Y138 is the Proton donor/acceptor of the active site. K166 serves as the catalytic Schiff-base intermediate with substrate. Position 206 (V206) interacts with pyruvate.

Belongs to the DapA family. Homotetramer; dimer of dimers.

It is found in the cytoplasm. It catalyses the reaction L-aspartate 4-semialdehyde + pyruvate = (2S,4S)-4-hydroxy-2,3,4,5-tetrahydrodipicolinate + H2O + H(+). It participates in amino-acid biosynthesis; L-lysine biosynthesis via DAP pathway; (S)-tetrahydrodipicolinate from L-aspartate: step 3/4. In terms of biological role, catalyzes the condensation of (S)-aspartate-beta-semialdehyde [(S)-ASA] and pyruvate to 4-hydroxy-tetrahydrodipicolinate (HTPA). The polypeptide is 4-hydroxy-tetrahydrodipicolinate synthase (Cutibacterium acnes (strain DSM 16379 / KPA171202) (Propionibacterium acnes)).